The chain runs to 342 residues: Tetraacyldisaccharide 4'-kinase (342 aa).

68–75 (TVGGTGKT) is a binding site for ATP.

Belongs to the LpxK family.

It carries out the reaction a lipid A disaccharide + ATP = a lipid IVA + ADP + H(+). Its pathway is glycolipid biosynthesis; lipid IV(A) biosynthesis; lipid IV(A) from (3R)-3-hydroxytetradecanoyl-[acyl-carrier-protein] and UDP-N-acetyl-alpha-D-glucosamine: step 6/6. In terms of biological role, transfers the gamma-phosphate of ATP to the 4'-position of a tetraacyldisaccharide 1-phosphate intermediate (termed DS-1-P) to form tetraacyldisaccharide 1,4'-bis-phosphate (lipid IVA). This Burkholderia pseudomallei (strain K96243) protein is Tetraacyldisaccharide 4'-kinase.